Here is a 271-residue protein sequence, read N- to C-terminus: uncharacterized protein (271 aa).

An N-terminal signal peptide occupies residues 1-22; it reads MIHSKRLKLCLCLIILSVFIGA. Cys-23 is lipidated: N-palmitoyl cysteine. The S-diacylglycerol cysteine moiety is linked to residue Cys-23.

This sequence belongs to the staphylococcal tandem lipoprotein family.

It is found in the cell membrane. This is an uncharacterized protein from Staphylococcus aureus (strain MW2).